The chain runs to 925 residues: Proto-oncogene DBL (925 aa).

One can recognise a CRAL-TRIO domain in the interval 1 to 88; sequence MAEANPRRGK…ELGGTLQYCH (88 aa). The Spectrin repeat unit spans residues 221–322; it reads WKFEQDFQQL…EIKAKRIQLS (102 aa). The DH domain occupies 495–675; sequence LKNHVLNELI…LDLLKSVNDS (181 aa). The region spanning 687–809 is the PH domain; that stretch reads NLNELGKMIM…WLKEIRNILL (123 aa).

It belongs to the MCF2 family. As to quaternary structure, interacts with an array of inositol phospholipids such as phosphatidylinositol 3-phosphate (PI3P), phosphatidylinositol 4-phosphate (PI4P) and phosphatidylinositol 5-phosphate (PI5P). May interact with CCPG1. Phosphorylation by TNK2 enhances guanine nucleotide exchange factor (GEF) activity toward Rho family proteins. In terms of tissue distribution, isoform 1 is expressed only in brain. Isoform 3 is expressed in heart, kidney, spleen, liver and testis. Isoform 4 is expressed in brain, heart, kidney, testis, placenta, stomach and peripheral blood. The protein is detectable in brain, heart, kidney, intestine, muscle, lung and testis.

It is found in the cytoplasm. The protein localises to the membrane. Functionally, guanine nucleotide exchange factor (GEF) that modulates the Rho family of GTPases. Promotes the conversion of some member of the Rho family GTPase from the GDP-bound to the GTP-bound form. Isoform 1 exhibits no activity toward RHOA, RAC1 or CDC42. Isoform 2 exhibits decreased GEF activity toward CDC42. Isoform 3 exhibits a weak but significant activity toward RAC1 and CDC42. Isoform 4 exhibits significant activity toward RHOA and CDC42. The truncated DBL oncogene is active toward RHOA, RAC1 and CDC42. This is Proto-oncogene DBL (MCF2) from Homo sapiens (Human).